We begin with the raw amino-acid sequence, 194 residues long: Probable RNA 2'-phosphotransferase (194 aa).

It belongs to the KptA/TPT1 family.

Its function is as follows. Removes the 2'-phosphate from RNA via an intermediate in which the phosphate is ADP-ribosylated by NAD followed by a presumed transesterification to release the RNA and generate ADP-ribose 1''-2''-cyclic phosphate (APPR&gt;P). May function as an ADP-ribosylase. The polypeptide is Probable RNA 2'-phosphotransferase (Burkholderia lata (strain ATCC 17760 / DSM 23089 / LMG 22485 / NCIMB 9086 / R18194 / 383)).